The chain runs to 868 residues: DNA mismatch repair protein MutS (868 aa).

620-627 (GPNMGGKS) is an ATP binding site.

It belongs to the DNA mismatch repair MutS family.

This protein is involved in the repair of mismatches in DNA. It is possible that it carries out the mismatch recognition step. This protein has a weak ATPase activity. In Xylella fastidiosa (strain 9a5c), this protein is DNA mismatch repair protein MutS.